The sequence spans 1354 residues: Rho-associated protein kinase 1 (1354 aa).

S2 is subject to N-acetylserine. One can recognise a Protein kinase domain in the interval 76–338 (YEVVKVIGRG…VEEIKRHLFF (263 aa)). Residues 82 to 90 (IGRGAFGEV) and K105 contribute to the ATP site. D198 functions as the Proton acceptor in the catalytic mechanism. Residues 341–409 (DQWAWETLRD…YSNRRYLSPA (69 aa)) enclose the AGC-kinase C-terminal domain. Residues 368 to 727 (FDDLEEDKGD…KKLKEEREAR (360 aa)) form an interaction with FHOD1 region. A coiled-coil region spans residues 422-692 (KSLQENLQKT…RLEQEVNEHK (271 aa)). Positions 479–556 (STVSQIEKEK…LEEANDLLRT (78 aa)) constitute an REM-1 domain. The SHROOM3 binding stretch occupies residues 707-946 (EAKSVAMCEM…AVSRLEETNS (240 aa)). Residues 949 to 1015 (TKDIELLRKE…LAEIMNRKDF (67 aa)) form the RhoBD domain. An RHOA binding region spans residues 998–1010 (LKTQAVNKLAEIM). Residues 1011–1102 (NRKDFKIDKK…KLSDLSDSTS (92 aa)) are a coiled coil. The segment at 1101-1120 (TSVASFPSADETDPNLPESR) is disordered. S1105 and S1108 each carry phosphoserine. Residues 1115–1354 (NLPESRIEGW…VVKNTSGKTS (240 aa)) are auto-inhibitory. A PH domain is found at 1118–1317 (ESRIEGWLSV…WVTHLVKKIP (200 aa)). The Phorbol-ester/DAG-type zinc finger occupies 1228–1283 (GHEFIPTLYHFPANCEACAKPLWHVFKPPPALECRRCHVKCHRDHLDKKEDLISPC). S1328 bears the Phosphoserine mark. The interval 1333–1354 (STRSTANQSFRKVVKNTSGKTS) is disordered.

The protein belongs to the protein kinase superfamily. AGC Ser/Thr protein kinase family. Homodimer. Interacts with RHOA (activated by GTP), RHOB, RHOC, GEM, MYLC2B, RHOE, PPP1R12A, LIMK1, LIMK2, TSG101, CHORDC1, DAPK3, PFN1, PTEN and JIP3. Interacts with FHOD1 in a Src-dependent manner. Interacts with ITGB1BP1 (via N-terminus and PTB domain). Interacts with SHROOM3. Requires Mg(2+) as cofactor. In terms of processing, autophosphorylated on serine and threonine residues. Post-translationally, cleaved by caspase-3 during apoptosis. This leads to constitutive activation of the kinase and membrane blebbing. In terms of tissue distribution, detected in corneal epithelium.

It is found in the cytoplasm. Its subcellular location is the cytoskeleton. The protein localises to the microtubule organizing center. It localises to the centrosome. The protein resides in the centriole. It is found in the golgi apparatus membrane. Its subcellular location is the cell projection. The protein localises to the bleb. It localises to the cell membrane. The protein resides in the lamellipodium. It is found in the ruffle. It catalyses the reaction L-seryl-[protein] + ATP = O-phospho-L-seryl-[protein] + ADP + H(+). The catalysed reaction is L-threonyl-[protein] + ATP = O-phospho-L-threonyl-[protein] + ADP + H(+). Its activity is regulated as follows. Activated by RHOA binding. Inhibited by Y-27632. In terms of biological role, protein kinase which is a key regulator of the actin cytoskeleton and cell polarity. Involved in regulation of smooth muscle contraction, actin cytoskeleton organization, stress fiber and focal adhesion formation, neurite retraction, cell adhesion and motility via phosphorylation of DAPK3, GFAP, LIMK1, LIMK2, MYL9/MLC2, TPPP, PFN1 and PPP1R12A. Phosphorylates FHOD1 and acts synergistically with it to promote SRC-dependent non-apoptotic plasma membrane blebbing. Phosphorylates JIP3 and regulates the recruitment of JNK to JIP3 upon UVB-induced stress. Acts as a suppressor of inflammatory cell migration by regulating PTEN phosphorylation and stability. Acts as a negative regulator of VEGF-induced angiogenic endothelial cell activation. Required for centrosome positioning and centrosome-dependent exit from mitosis. Plays a role in terminal erythroid differentiation. Inhibits podocyte motility via regulation of actin cytoskeletal dynamics and phosphorylation of CFL1. Promotes keratinocyte terminal differentiation. Involved in osteoblast compaction through the fibronectin fibrillogenesis cell-mediated matrix assembly process, essential for osteoblast mineralization. May regulate closure of the eyelids and ventral body wall by inducing the assembly of actomyosin bundles. This is Rho-associated protein kinase 1 (ROCK1) from Oryctolagus cuniculus (Rabbit).